A 71-amino-acid polypeptide reads, in one-letter code: Translation initiation factor IF-1 (71 aa).

Residues 1-71 (MANDVIEIEG…TKGRITYRFR (71 aa)) form the S1-like domain.

It belongs to the IF-1 family. In terms of assembly, component of the 30S ribosomal translation pre-initiation complex which assembles on the 30S ribosome in the order IF-2 and IF-3, IF-1 and N-formylmethionyl-tRNA(fMet); mRNA recruitment can occur at any time during PIC assembly.

The protein localises to the cytoplasm. In terms of biological role, one of the essential components for the initiation of protein synthesis. Stabilizes the binding of IF-2 and IF-3 on the 30S subunit to which N-formylmethionyl-tRNA(fMet) subsequently binds. Helps modulate mRNA selection, yielding the 30S pre-initiation complex (PIC). Upon addition of the 50S ribosomal subunit IF-1, IF-2 and IF-3 are released leaving the mature 70S translation initiation complex. In Leuconostoc mesenteroides subsp. mesenteroides (strain ATCC 8293 / DSM 20343 / BCRC 11652 / CCM 1803 / JCM 6124 / NCDO 523 / NBRC 100496 / NCIMB 8023 / NCTC 12954 / NRRL B-1118 / 37Y), this protein is Translation initiation factor IF-1.